The chain runs to 417 residues: Serine hydroxymethyltransferase (417 aa).

Residues leucine 117 and 121–123 (GHL) each bind (6S)-5,6,7,8-tetrahydrofolate. Lysine 226 is modified (N6-(pyridoxal phosphate)lysine).

It belongs to the SHMT family. Homodimer. Pyridoxal 5'-phosphate is required as a cofactor.

The protein localises to the cytoplasm. It catalyses the reaction (6R)-5,10-methylene-5,6,7,8-tetrahydrofolate + glycine + H2O = (6S)-5,6,7,8-tetrahydrofolate + L-serine. The protein operates within one-carbon metabolism; tetrahydrofolate interconversion. It participates in amino-acid biosynthesis; glycine biosynthesis; glycine from L-serine: step 1/1. In terms of biological role, catalyzes the reversible interconversion of serine and glycine with tetrahydrofolate (THF) serving as the one-carbon carrier. This reaction serves as the major source of one-carbon groups required for the biosynthesis of purines, thymidylate, methionine, and other important biomolecules. Also exhibits THF-independent aldolase activity toward beta-hydroxyamino acids, producing glycine and aldehydes, via a retro-aldol mechanism. In Shouchella clausii (strain KSM-K16) (Alkalihalobacillus clausii), this protein is Serine hydroxymethyltransferase.